A 591-amino-acid polypeptide reads, in one-letter code: L-gulonolactone oxidase 2 (591 aa).

The first 27 residues, 1 to 27 (MAFTFPPSYRTLVGLYYIFTLMHTAVS), serve as a signal peptide directing secretion. The FAD-binding PCMH-type domain occupies 56-238 (STCRAANVAY…SQVTFELQPM (183 aa)).

This sequence belongs to the oxygen-dependent FAD-linked oxidoreductase family. FAD is required as a cofactor.

The enzyme catalyses L-gulono-1,4-lactone + O2 = L-ascorbate + H2O2 + H(+). It participates in cofactor biosynthesis; L-ascorbate biosynthesis. Functionally, catalyzes the oxidation of L-gulono-1,4-lactone to ascorbic acid. L-gulono-1,4-lactone is oxidized to hydrogen peroxide and L-xylo-hexulonolactone which spontaneously isomerizes to L-ascorbate. The protein is L-gulonolactone oxidase 2 of Arabidopsis thaliana (Mouse-ear cress).